The chain runs to 28 residues: Conotoxin Cal6.43b (28 aa).

3 disulfide bridges follow: cysteine 3–cysteine 13, cysteine 7–cysteine 19, and cysteine 12–cysteine 25.

In terms of tissue distribution, expressed by the venom duct.

Its subcellular location is the secreted. In terms of biological role, probable neurotoxin with unknown target. Possibly targets ion channels. The protein is Conotoxin Cal6.43b of Californiconus californicus (California cone).